The following is a 283-amino-acid chain: Thymidylate synthase (283 aa).

Arg-22 contributes to the dUMP binding site. The Nucleophile role is filled by Cys-160. DUMP-binding positions include 180-183, Asn-191, and 221-223; these read RSCD and HIY. Asp-183 lines the (6R)-5,10-methylene-5,6,7,8-tetrahydrofolate pocket. Position 282 (Ser-282) interacts with (6R)-5,10-methylene-5,6,7,8-tetrahydrofolate.

The protein belongs to the thymidylate synthase family. Bacterial-type ThyA subfamily. As to quaternary structure, homodimer.

The protein localises to the cytoplasm. The enzyme catalyses dUMP + (6R)-5,10-methylene-5,6,7,8-tetrahydrofolate = 7,8-dihydrofolate + dTMP. The protein operates within pyrimidine metabolism; dTTP biosynthesis. Its function is as follows. Catalyzes the reductive methylation of 2'-deoxyuridine-5'-monophosphate (dUMP) to 2'-deoxythymidine-5'-monophosphate (dTMP) while utilizing 5,10-methylenetetrahydrofolate (mTHF) as the methyl donor and reductant in the reaction, yielding dihydrofolate (DHF) as a by-product. This enzymatic reaction provides an intracellular de novo source of dTMP, an essential precursor for DNA biosynthesis. The chain is Thymidylate synthase from Pseudoalteromonas translucida (strain TAC 125).